The following is an 880-amino-acid chain: DNA mismatch repair protein MutS (880 aa).

605-612 (GPNMSGKS) lines the ATP pocket. Positions 790 to 829 (QETAAVPSRGVEPPAPVIEPTPAKEQTPVKEQTTPLVEES) are disordered. The segment covering 818 to 829 (VKEQTTPLVEES) has biased composition (polar residues).

Belongs to the DNA mismatch repair MutS family.

Functionally, this protein is involved in the repair of mismatches in DNA. It is possible that it carries out the mismatch recognition step. This protein has a weak ATPase activity. The sequence is that of DNA mismatch repair protein MutS from Limosilactobacillus fermentum (strain NBRC 3956 / LMG 18251) (Lactobacillus fermentum).